The chain runs to 319 residues: Type II methyltransferase M.MpnI (319 aa).

It belongs to the N(4)/N(6)-methyltransferase family.

It catalyses the reaction a 2'-deoxyadenosine in DNA + S-adenosyl-L-methionine = an N(6)-methyl-2'-deoxyadenosine in DNA + S-adenosyl-L-homocysteine + H(+). In terms of biological role, a methylase that recognizes the double-stranded sequence 5'-CTAT-3' and methylates A-3 on one strand; probably responsible for all of the methylation on this site in the genome. The sequence is that of Type II methyltransferase M.MpnI from Mycoplasma pneumoniae (strain ATCC 29342 / M129 / Subtype 1) (Mycoplasmoides pneumoniae).